Here is a 90-residue protein sequence, read N- to C-terminus: Histone H1.M6.2 (90 aa).

Residues 1 to 90 form a disordered region; that stretch reads MSDAAVPPKK…KAVKKAPKKK (90 aa). Residues 11-90 show a composition bias toward basic residues; sequence ASPKKAAAKK…KAVKKAPKKK (80 aa).

It is found in the nucleus. The protein localises to the chromosome. This Trypanosoma cruzi protein is Histone H1.M6.2.